Consider the following 226-residue polypeptide: MGIIKFDKVTQVFGDLYVLRNITVQLTERRIAVIGANGSGKSTFVRLINGLQLPSHGFVSVDGLDTKNDAKAIKHKVGFVFQNPDNQIVLPLVEEDLSFGLKNLKLSKEEVKERVDEILQRYDLQNFRNHAVHLLSGGQKQLVAISGVVAMKPDYIIFDEPTTLLDLRNKRLITQVIEELSQTAIVVSHDLEFIRNFDRVLVFDKGEIVVDDIPLVAIKEYIRRMS.

The ABC transporter domain occupies 4–222 (IKFDKVTQVF…IPLVAIKEYI (219 aa)). 35 to 42 (GANGSGKS) is a binding site for ATP.

It belongs to the ABC transporter superfamily.

The protein localises to the cell inner membrane. Its function is as follows. Probably part of an ABC transporter complex. Responsible for energy coupling to the transport system. The protein is Putative ABC transporter ATP-binding protein BH02760 of Bartonella henselae (strain ATCC 49882 / DSM 28221 / CCUG 30454 / Houston 1) (Rochalimaea henselae).